The primary structure comprises 362 residues: Very-long-chain (3R)-3-hydroxyacyl-CoA dehydratase 3 (362 aa).

Methionine 1 carries the post-translational modification N-acetylmethionine. Residues 1 to 149 are Cytoplasmic-facing; that stretch reads MENQVLTPHV…ETLTNLRKGY (149 aa). The CS domain occupies 5 to 94; that stretch reads VLTPHVYWAQ…KVSQWWERLT (90 aa). The residue at position 7 (threonine 7) is a Phosphothreonine. A coiled-coil region spans residues 111 to 136; it reads LDESDAEMELRAKEEERLNKLRLESE. Phosphoserine is present on residues serine 114 and serine 135. The chain crosses the membrane as a helical span at residues 150–170; the sequence is LFMYNLVQFLGFSWIFVNLTV. Residues 171-185 are Lumenal-facing; the sequence is RFCILGKESFYDTFH. A helical membrane pass occupies residues 186–207; the sequence is TVADMMYFCQMLAVVETINAAI. The Cytoplasmic portion of the chain corresponds to 208 to 217; that stretch reads GVTTSPVLPS. A helical transmembrane segment spans residues 218 to 235; it reads LIQLLGRNFILFIIFGTM. Residues 236–241 are Lumenal-facing; it reads EEMQNK. Residues 242 to 256 traverse the membrane as a helical segment; sequence AVVFFVFYLWSAIEI. Residues 257-279 are Cytoplasmic-facing; that stretch reads FRYSFYMLTCIDMDWKVLTWLRY. A helical transmembrane segment spans residues 280–298; it reads TLWIPLYPLGCLAEAVSVI. Active-site residues include tyrosine 286 and glutamate 293. Residues 299–322 lie on the Lumenal side of the membrane; the sequence is QSIPIFNETGRFSFTLPYPVKIKV. A helical membrane pass occupies residues 323 to 343; sequence RFSFFLQIYLIMIFLGLYINF. The Cytoplasmic segment spans residues 344–362; that stretch reads RHLYKQRRRRYGQKKKKIH.

It belongs to the very long-chain fatty acids dehydratase HACD family. In terms of assembly, may interact with enzymes of the ELO family (including ELOVL1); with those enzymes that mediate condensation, the first of the four steps of the reaction cycle responsible for fatty acids elongation, may be part of a larger fatty acids elongase complex. Interacts with RAC1. Associates with internalized insulin receptor/INSR complexes on Golgi/endosomal membranes; HACD3/PTPLAD1 together with ATIC and PRKAA2/AMPK2 is proposed to be part of a signaling network regulating INSR autophosphorylation and endocytosis. As to expression, highly expressed in testis, kidney, brain, liver and weakly in skeletal muscle, spleen and heart. No expression detected in leukocytes.

The protein resides in the endoplasmic reticulum membrane. It catalyses the reaction a very-long-chain (3R)-3-hydroxyacyl-CoA = a very-long-chain (2E)-enoyl-CoA + H2O. The enzyme catalyses (3R)-hydroxyhexadecanoyl-CoA = (2E)-hexadecenoyl-CoA + H2O. The protein operates within lipid metabolism; fatty acid biosynthesis. Catalyzes the third of the four reactions of the long-chain fatty acids elongation cycle. This endoplasmic reticulum-bound enzymatic process, allows the addition of two carbons to the chain of long- and very long-chain fatty acids/VLCFAs per cycle. This enzyme catalyzes the dehydration of the 3-hydroxyacyl-CoA intermediate into trans-2,3-enoyl-CoA, within each cycle of fatty acid elongation. Thereby, it participates in the production of VLCFAs of different chain lengths that are involved in multiple biological processes as precursors of membrane lipids and lipid mediators. May be involved in Rac1-signaling pathways leading to the modulation of gene expression. Promotes insulin receptor/INSR autophosphorylation and is involved in INSR internalization. In Homo sapiens (Human), this protein is Very-long-chain (3R)-3-hydroxyacyl-CoA dehydratase 3.